We begin with the raw amino-acid sequence, 504 residues long: Anaerobic nitric oxide reductase transcription regulator NorR (504 aa).

A 4-aspartylphosphate modification is found at aspartate 57. The Sigma-54 factor interaction domain occupies 187 to 416 (MIGLSPGMTQ…LEHAIHRAVV (230 aa)). ATP-binding positions include 215–222 (GETGTGKE) and 278–287 (ADNGTLFLDE). A DNA-binding region (H-T-H motif) is located at residues 479-498 (WAACARMLETDVANLHRLAK).

The protein operates within nitrogen metabolism; nitric oxide reduction. Functionally, required for the expression of anaerobic nitric oxide (NO) reductase, acts as a transcriptional activator for at least the norVW operon. Activation also requires sigma-54. This Shigella boydii serotype 4 (strain Sb227) protein is Anaerobic nitric oxide reductase transcription regulator NorR.